The following is a 74-amino-acid chain: RNA-binding protein Hfq (74 aa).

The Sm domain occupies 9–69 (DQFLNQLRKD…ISTFAPEKNV (61 aa)).

This sequence belongs to the Hfq family. As to quaternary structure, homohexamer.

Its function is as follows. RNA chaperone that binds small regulatory RNA (sRNAs) and mRNAs to facilitate mRNA translational regulation in response to envelope stress, environmental stress and changes in metabolite concentrations. Also binds with high specificity to tRNAs. The protein is RNA-binding protein Hfq of Geobacillus sp. (strain WCH70).